The chain runs to 765 residues: E3 ubiquitin-protein ligase SMURF2 (765 aa).

The 117-residue stretch at 1–117 folds into the C2 domain; it reads MSNQGVRRNG…KDTGYQRLDL (117 aa). WW domains follow at residues 157–190, 251–284, and 297–330; these read NDLP…RPTR, PDLP…DPRV, and GPLP…DPRL. The disordered stretch occupies residues 341–375; it reads SPNGSRAAVEAQSSSRPGQLKEQAQSVVSPGNLPE. Polar residues predominate over residues 351–369; the sequence is AQSSSRPGQLKEQAQSVVS. The HECT domain maps to 431-765; the sequence is RPKDLWKRLM…IEETCGFAVE (335 aa). Catalysis depends on C733, which acts as the Glycyl thioester intermediate.

It localises to the nucleus. The protein resides in the cytoplasm. Its subcellular location is the cell membrane. The protein localises to the membrane raft. It carries out the reaction S-ubiquitinyl-[E2 ubiquitin-conjugating enzyme]-L-cysteine + [acceptor protein]-L-lysine = [E2 ubiquitin-conjugating enzyme]-L-cysteine + N(6)-ubiquitinyl-[acceptor protein]-L-lysine.. The protein operates within protein modification; protein ubiquitination. In terms of biological role, E3 ubiquitin-protein ligase which accepts ubiquitin from an E2 ubiquitin-conjugating enzyme in the form of a thioester and then directly transfers the ubiquitin to targeted substrates. The chain is E3 ubiquitin-protein ligase SMURF2 (smurf2) from Danio rerio (Zebrafish).